A 476-amino-acid chain; its full sequence is Thymidine phosphorylase (476 aa).

The segment covering 1-11 (MAAPGTPPPLA) has biased composition (pro residues). The interval 1-26 (MAAPGTPPPLAPETAGADSGGGSGEH) is disordered. 2 positions are modified to phosphothreonine: Thr-6 and Thr-475.

This sequence belongs to the thymidine/pyrimidine-nucleoside phosphorylase family. As to quaternary structure, homodimer.

The enzyme catalyses thymidine + phosphate = 2-deoxy-alpha-D-ribose 1-phosphate + thymine. It functions in the pathway pyrimidine metabolism; dTMP biosynthesis via salvage pathway; dTMP from thymine: step 1/2. Catalyzes the reversible phosphorolysis of thymidine. The produced molecules are then utilized as carbon and energy sources or in the rescue of pyrimidine bases for nucleotide synthesis. This chain is Thymidine phosphorylase (Tymp), found in Rattus norvegicus (Rat).